We begin with the raw amino-acid sequence, 312 residues long: MASYLDFEKNIQQIDEDIINAQIKGDTEAVSILKKNLEKEISKTYKNLSDFQRLQLARHPDRPYALDYIELILNDAHEIHGDRAFRDDPAIVCFMGYLGEKKIIVIGEQKGRGTKDKIARNFGMPHPEGYRKALRVARLAEKFQIPILFLIDTPGAYPGIGAEERGQSEAIARNLYELSDLKIPTIAIVIGEGGSGGALAIGVADRLAMMKNSVFSVISPEGCAAILWNDPAKSEAATKAMKVTADDLKSQGLIDDVIDEPTNGAHRNKEAAAVAIADYVKKSLNELENIDVRELSANRMQKILKLGAYQEA.

Residues 36–286 enclose the CoA carboxyltransferase C-terminal domain; it reads NLEKEISKTY…ADYVKKSLNE (251 aa).

The protein belongs to the AccA family. Acetyl-CoA carboxylase is a heterohexamer composed of biotin carboxyl carrier protein (AccB), biotin carboxylase (AccC) and two subunits each of ACCase subunit alpha (AccA) and ACCase subunit beta (AccD).

The protein resides in the cytoplasm. The catalysed reaction is N(6)-carboxybiotinyl-L-lysyl-[protein] + acetyl-CoA = N(6)-biotinyl-L-lysyl-[protein] + malonyl-CoA. Its pathway is lipid metabolism; malonyl-CoA biosynthesis; malonyl-CoA from acetyl-CoA: step 1/1. Functionally, component of the acetyl coenzyme A carboxylase (ACC) complex. First, biotin carboxylase catalyzes the carboxylation of biotin on its carrier protein (BCCP) and then the CO(2) group is transferred by the carboxyltransferase to acetyl-CoA to form malonyl-CoA. In Campylobacter jejuni subsp. jejuni serotype O:6 (strain 81116 / NCTC 11828), this protein is Acetyl-coenzyme A carboxylase carboxyl transferase subunit alpha.